A 679-amino-acid chain; its full sequence is Cysteine-rich receptor-like protein kinase 29 (679 aa).

Residues 1-23 (MEHVRVIFFFACFLTLAPFHAFA) form the signal peptide. Residues 24-286 (QVDSYEFDPD…RTGKGKGGSK (263 aa)) are Extracellular-facing. Gnk2-homologous domains are found at residues 30 to 134 (FDPD…NRTI) and 140 to 249 (TNPT…TWRF). N-linked (GlcNAc...) asparagine glycans are attached at residues Asn41, Asn45, Asn71, Asn107, Asn131, and Asn187. The disordered stretch occupies residues 260-281 (PPAIQPADSPQSAARTERTGKG). The chain crosses the membrane as a helical span at residues 287-307 (VIIAIVIPILLVALLAICLCL). At 308-679 (VLKWRKNKSG…DVTVSEFSPR (372 aa)) the chain is on the cytoplasmic side. Residues 357–637 (FSSENELGRG…SLMLNSYSFT (281 aa)) enclose the Protein kinase domain. ATP is bound by residues 363–371 (LGRGGFGSV) and Lys385. Tyr430 carries the phosphotyrosine modification. Asp482 serves as the catalytic Proton acceptor. Ser486 is subject to Phosphoserine. Thr524 is subject to Phosphothreonine. A Phosphotyrosine modification is found at Tyr532. Residues 659 to 679 (SSTEGLQMSSNDVTVSEFSPR) form a disordered region.

It belongs to the protein kinase superfamily. Ser/Thr protein kinase family. CRK subfamily.

The protein resides in the membrane. The catalysed reaction is L-seryl-[protein] + ATP = O-phospho-L-seryl-[protein] + ADP + H(+). It catalyses the reaction L-threonyl-[protein] + ATP = O-phospho-L-threonyl-[protein] + ADP + H(+). The protein is Cysteine-rich receptor-like protein kinase 29 (CRK29) of Arabidopsis thaliana (Mouse-ear cress).